The sequence spans 164 residues: UPF0303 protein Smed_2872 (164 aa).

This sequence belongs to the UPF0303 family.

The chain is UPF0303 protein Smed_2872 from Sinorhizobium medicae (strain WSM419) (Ensifer medicae).